The following is a 477-amino-acid chain: Glycogen synthase (477 aa).

Lys-15 contacts ADP-alpha-D-glucose.

The protein belongs to the glycosyltransferase 1 family. Bacterial/plant glycogen synthase subfamily.

The enzyme catalyses [(1-&gt;4)-alpha-D-glucosyl](n) + ADP-alpha-D-glucose = [(1-&gt;4)-alpha-D-glucosyl](n+1) + ADP + H(+). Its pathway is glycan biosynthesis; glycogen biosynthesis. Functionally, synthesizes alpha-1,4-glucan chains using ADP-glucose. This is Glycogen synthase from Shigella dysenteriae serotype 1 (strain Sd197).